Reading from the N-terminus, the 499-residue chain is Catalase (499 aa).

Positions 1 to 25 (MTDRPIMTTSAGAPIPDNQNSLTAG) are disordered. The segment covering 7–23 (MTTSAGAPIPDNQNSLT) has biased composition (polar residues). Active-site residues include histidine 55 and asparagine 127. A heme-binding site is contributed by tyrosine 337.

Belongs to the catalase family. As to quaternary structure, homotetramer. Requires heme as cofactor.

The protein localises to the periplasm. The enzyme catalyses 2 H2O2 = O2 + 2 H2O. Its function is as follows. Decomposes hydrogen peroxide into water and oxygen; serves to protect cells from the toxic effects of hydrogen peroxide. In Brucella abortus biovar 1 (strain 9-941), this protein is Catalase (katA).